Consider the following 132-residue polypeptide: Holo-[acyl-carrier-protein] synthase (132 aa).

Positions 8 and 64 each coordinate Mg(2+).

The protein belongs to the P-Pant transferase superfamily. AcpS family. The cofactor is Mg(2+).

It is found in the cytoplasm. It carries out the reaction apo-[ACP] + CoA = holo-[ACP] + adenosine 3',5'-bisphosphate + H(+). In terms of biological role, transfers the 4'-phosphopantetheine moiety from coenzyme A to a Ser of acyl-carrier-protein. The sequence is that of Holo-[acyl-carrier-protein] synthase from Shewanella woodyi (strain ATCC 51908 / MS32).